We begin with the raw amino-acid sequence, 300 residues long: PAK4-inhibitor INKA2 (300 aa).

3 disordered regions span residues 59–104 (GGTP…SSPK), 178–201 (LEKG…GQSR), and 230–288 (KEKP…LEPS). Polar residues predominate over residues 60–73 (GTPTFSCPESSQEQ). Positions 93-102 (SSSQPSFDSS) are enriched in low complexity. The interval 140–183 (EPDDWTSTLMSRGRNRQPLVLGDNVFADLVGNWLDLPELEKGGE) is inka box. The span at 246 to 256 (GRSKKVKKRSL) shows a compositional bias: basic residues.

It belongs to the INKA family. As to quaternary structure, interacts with PAK4. Enriched in the nervous system.

The protein resides in the nucleus. Functionally, inhibitor of the serine/threonine-protein kinase PAK4. Acts by binding PAK4 in a substrate-like manner, inhibiting the protein kinase activity. The polypeptide is PAK4-inhibitor INKA2 (Mus musculus (Mouse)).